The sequence spans 72 residues: UPF0270 protein plu0398 (72 aa).

It belongs to the UPF0270 family.

The polypeptide is UPF0270 protein plu0398 (Photorhabdus laumondii subsp. laumondii (strain DSM 15139 / CIP 105565 / TT01) (Photorhabdus luminescens subsp. laumondii)).